A 184-amino-acid chain; its full sequence is dCTP deaminase (184 aa).

DCTP is bound by residues arginine 97–arginine 102 and aspartate 113. Catalysis depends on glutamate 123, which acts as the Proton donor/acceptor. DCTP contacts are provided by tyrosine 155 and glutamine 162.

It belongs to the dCTP deaminase family. Homotrimer.

The enzyme catalyses dCTP + H2O + H(+) = dUTP + NH4(+). Its pathway is pyrimidine metabolism; dUMP biosynthesis; dUMP from dCTP (dUTP route): step 1/2. Functionally, catalyzes the deamination of dCTP to dUTP. In Saccharolobus solfataricus (strain ATCC 35092 / DSM 1617 / JCM 11322 / P2) (Sulfolobus solfataricus), this protein is dCTP deaminase.